Here is a 173-residue protein sequence, read N- to C-terminus: Photosystem I reaction center subunit XI (173 aa).

Helical transmembrane passes span Leu92–Tyr112 and Leu148–Ile168.

It belongs to the PsaL family.

It is found in the cellular thylakoid membrane. The protein is Photosystem I reaction center subunit XI of Nostoc punctiforme (strain ATCC 29133 / PCC 73102).